Reading from the N-terminus, the 103-residue chain is Large ribosomal subunit protein bL21 (103 aa).

The protein belongs to the bacterial ribosomal protein bL21 family. As to quaternary structure, part of the 50S ribosomal subunit. Contacts protein L20.

This protein binds to 23S rRNA in the presence of protein L20. The sequence is that of Large ribosomal subunit protein bL21 from Thiobacillus denitrificans (strain ATCC 25259 / T1).